The chain runs to 298 residues: Acetylglutamate kinase (298 aa).

Substrate is bound by residues 69 to 70 (GG), Arg-91, and Asn-196.

This sequence belongs to the acetylglutamate kinase family. ArgB subfamily.

The protein localises to the cytoplasm. The enzyme catalyses N-acetyl-L-glutamate + ATP = N-acetyl-L-glutamyl 5-phosphate + ADP. It participates in amino-acid biosynthesis; L-arginine biosynthesis; N(2)-acetyl-L-ornithine from L-glutamate: step 2/4. Catalyzes the ATP-dependent phosphorylation of N-acetyl-L-glutamate. The protein is Acetylglutamate kinase of Rhodopseudomonas palustris (strain BisA53).